The chain runs to 123 residues: Fluoride-specific ion channel FluC (123 aa).

4 helical membrane-spanning segments follow: residues Leu-7–Leu-27, Met-39–Phe-59, Phe-68–Phe-88, and Leu-101–Ala-121. The Na(+) site is built by Gly-75 and Ser-78.

Belongs to the fluoride channel Fluc/FEX (TC 1.A.43) family.

It is found in the cell membrane. The catalysed reaction is fluoride(in) = fluoride(out). With respect to regulation, na(+) is not transported, but it plays an essential structural role and its presence is essential for fluoride channel function. In terms of biological role, fluoride-specific ion channel. Important for reducing fluoride concentration in the cell, thus reducing its toxicity. This chain is Fluoride-specific ion channel FluC, found in Thermococcus gammatolerans (strain DSM 15229 / JCM 11827 / EJ3).